The chain runs to 311 residues: Dihydroorotate dehydrogenase B (NAD(+)), catalytic subunit (311 aa).

FMN-binding positions include Ser-24 and 48-49 (KA). Substrate contacts are provided by residues Lys-48 and 72–76 (NAIGL). Asn-104 and Asn-132 together coordinate FMN. Asn-132 lines the substrate pocket. The active-site Nucleophile is the Cys-135. FMN is bound by residues Lys-170 and Ile-196. 197–198 (NT) is a binding site for substrate. FMN-binding positions include Gly-222, 248-249 (GG), and 270-271 (GT).

The protein belongs to the dihydroorotate dehydrogenase family. Type 1 subfamily. As to quaternary structure, heterotetramer of 2 PyrK and 2 PyrD type B subunits. Requires FMN as cofactor.

It is found in the cytoplasm. It carries out the reaction (S)-dihydroorotate + NAD(+) = orotate + NADH + H(+). It participates in pyrimidine metabolism; UMP biosynthesis via de novo pathway; orotate from (S)-dihydroorotate (NAD(+) route): step 1/1. Catalyzes the conversion of dihydroorotate to orotate with NAD(+) as electron acceptor. Cannot use fumarate as an electron acceptor. The sequence is that of Dihydroorotate dehydrogenase B (NAD(+)), catalytic subunit (pyrDB) from Lactococcus lactis subsp. cremoris (strain MG1363).